Reading from the N-terminus, the 61-residue chain is Small ribosomal subunit protein uS14 (61 aa).

Zn(2+)-binding residues include cysteine 24, cysteine 27, cysteine 40, and cysteine 43.

It belongs to the universal ribosomal protein uS14 family. Zinc-binding uS14 subfamily. In terms of assembly, part of the 30S ribosomal subunit. Contacts proteins S3 and S10. It depends on Zn(2+) as a cofactor.

Functionally, binds 16S rRNA, required for the assembly of 30S particles and may also be responsible for determining the conformation of the 16S rRNA at the A site. The protein is Small ribosomal subunit protein uS14 of Anaeromyxobacter dehalogenans (strain 2CP-1 / ATCC BAA-258).